A 556-amino-acid polypeptide reads, in one-letter code: Trigger factor (556 aa).

In terms of domain architecture, PPIase FKBP-type spans 169–255 (GDVVVIDFAA…LREIKAKELP (87 aa)). A compositionally biased stretch (polar residues) spans 438 to 452 (VDSEGNPTQAPTSLA). Positions 438–556 (VDSEGNPTQA…KPSKKDKKGK (119 aa)) are disordered. The span at 461–472 (PEAEFEADEPEA) shows a compositional bias: acidic residues. Low complexity-rich tracts occupy residues 486-503 (ETAT…AEAE) and 511-526 (EASP…AEAT).

Belongs to the FKBP-type PPIase family. Tig subfamily.

The protein localises to the cytoplasm. The catalysed reaction is [protein]-peptidylproline (omega=180) = [protein]-peptidylproline (omega=0). In terms of biological role, involved in protein export. Acts as a chaperone by maintaining the newly synthesized protein in an open conformation. Functions as a peptidyl-prolyl cis-trans isomerase. The polypeptide is Trigger factor (Synechococcus sp. (strain JA-2-3B'a(2-13)) (Cyanobacteria bacterium Yellowstone B-Prime)).